The following is a 218-amino-acid chain: Hypoxanthine-guanine phosphoribosyltransferase (218 aa).

A GMP-binding site is contributed by Lys-69. Position 103 is an N6-acetyllysine (Lys-103). Lys-115 is covalently cross-linked (Glycyl lysine isopeptide (Lys-Gly) (interchain with G-Cter in SUMO1); alternate). A Glycyl lysine isopeptide (Lys-Gly) (interchain with G-Cter in SUMO2); alternate cross-link involves residue Lys-115. Residues 134–142 (EDIIDTGKT), Lys-166, 186–188 (KFV), and Asp-194 contribute to the GMP site. Catalysis depends on Asp-138, which acts as the Proton acceptor. Residue Thr-142 is modified to Phosphothreonine. A Mg(2+)-binding site is contributed by Asp-194.

It belongs to the purine/pyrimidine phosphoribosyltransferase family. As to quaternary structure, homotetramer. It depends on Mg(2+) as a cofactor.

It localises to the cytoplasm. The catalysed reaction is IMP + diphosphate = hypoxanthine + 5-phospho-alpha-D-ribose 1-diphosphate. It carries out the reaction GMP + diphosphate = guanine + 5-phospho-alpha-D-ribose 1-diphosphate. It functions in the pathway purine metabolism; IMP biosynthesis via salvage pathway; IMP from hypoxanthine: step 1/1. Converts guanine to guanosine monophosphate, and hypoxanthine to inosine monophosphate. Transfers the 5-phosphoribosyl group from 5-phosphoribosylpyrophosphate onto the purine. Plays a central role in the generation of purine nucleotides through the purine salvage pathway. The chain is Hypoxanthine-guanine phosphoribosyltransferase (Hprt1) from Mus musculus (Mouse).